A 383-amino-acid polypeptide reads, in one-letter code: Cysteine protease StiP (383 aa).

Belongs to the cysteine protease StiP family. Is probably processed via an autocatalytic removal of a proregion of about 100 amino acids.

Is inhibited by bromopyruvate in vitro. Activity is not affected by the presence of tellurite. Functionally, cysteine protease that may play a role in regulating cell morphology in response to stressful conditions which likely cause oxidative damage. Appears to catalyze its own cleavage, which probably leads to its activation. This is Cysteine protease StiP (stiP) from Acinetobacter baylyi (strain ATCC 33305 / BD413 / ADP1).